The following is a 134-amino-acid chain: uncharacterized protein (134 aa).

One can recognise an HTH tetR-type domain in the interval 10–70 (KETRQRIIDA…AVLASRQHPL (61 aa)). A DNA-binding region (H-T-H motif) is located at residues 33 to 52 (TLDQIARKAGVTRGAVYWHF).

Unknown, does not seem to be involved in regulation of the ttgGHI or ttgVW operons. This is an uncharacterized protein from Pseudomonas putida (strain DOT-T1E).